The chain runs to 864 residues: Leucine--tRNA ligase (864 aa).

Residues 42 to 52 (PYPSGKLHMGH) carry the 'HIGH' region motif. The 'KMSKS' region signature appears at 624–628 (KMSKS). K627 provides a ligand contact to ATP.

It belongs to the class-I aminoacyl-tRNA synthetase family.

It is found in the cytoplasm. It carries out the reaction tRNA(Leu) + L-leucine + ATP = L-leucyl-tRNA(Leu) + AMP + diphosphate. This is Leucine--tRNA ligase from Burkholderia vietnamiensis (strain G4 / LMG 22486) (Burkholderia cepacia (strain R1808)).